Reading from the N-terminus, the 53-residue chain is UPF0391 membrane protein Bmul_5473/BMULJ_06024 (53 aa).

2 consecutive transmembrane segments (helical) span residues 5-25 and 30-50; these read ALIF…GIAA and IAKI…LLGV.

This sequence belongs to the UPF0391 family.

Its subcellular location is the cell membrane. The chain is UPF0391 membrane protein Bmul_5473/BMULJ_06024 from Burkholderia multivorans (strain ATCC 17616 / 249).